The primary structure comprises 262 residues: Thrombin-like enzyme gyroxin B1.3 (262 aa).

The N-terminal stretch at 1 to 18 is a signal peptide; the sequence is MVLIRVLANLLILQLSYA. A propeptide spanning residues 19-262 is cleaved from the precursor; it reads QKSSELVIGG…AGSETVNCPS (244 aa). The Peptidase S1 domain occupies 25–253; it reads VIGGDECNIN…HLDWIQNIIA (229 aa). 6 disulfide bridges follow: C31/C165, C52/C68, C102/C260, C144/C214, C176/C193, and C204/C229. H67 serves as the catalytic Charge relay system. N105 carries an N-linked (GlcNAc...) asparagine glycan. Residue D112 is the Charge relay system of the active site. S208 acts as the Charge relay system in catalysis.

It belongs to the peptidase S1 family. Snake venom subfamily. In terms of assembly, monomer. Expressed by the venom gland.

Its subcellular location is the secreted. In terms of biological role, thrombin-like snake venom serine protease. Displays a specificity similar to trypsin. Releases only fibrinopeptide A in the conversion of fibrinogen to fibrin. Reversibly increases the permeability of the blood brain barrier (BBB) in mice. Induces the barrel rotation syndrome in mice, which is manifested by gyroxin-like, rapid rolling motions. This syndrome may be due to its effect on BBB permeability, and certainly also to other actions affecting endogenous substrates present in the endothelium, nervous tissues or blood. Also shows a moderate inhibitory activity on the human voltage-gated potassium channel Kv10.1/KCNH1/EAG1 (58% current inhibition at 5 uM). It blocks Kv10.1/KCNH1/EAG1 in a time and dose-dependent manner and with a mechanism independent of its enzymatic activity. It may have a preference in interacting with Kv10.1/KCNH1/EAG1 in its closed state, since the inhibitory effect of the toxin is decreased at more depolarized potentials. This Crotalus durissus terrificus (South American rattlesnake) protein is Thrombin-like enzyme gyroxin B1.3.